The sequence spans 125 residues: MPPPDPAAMGTWKFFRASVDGRPVFKKEFDKLPDQARAALIVLMQRYLVGDLAAGSIKPIRGDILELRWHEANNHFRVLFFRWGQHPVALTAFYKNQQKTPKTKIETALDRQKIWKRAFGDTPPI.

The protein belongs to the mycobacterial HigB family.

Toxic component of an atypical, type II toxin-antitoxin chaperone (TAC) system. Probably an endoribonuclease, neutralized by its cognate antitoxin HigA which also requires SecB-like chaperone MT2006 (AC Q7D7P7). This chain is Probable endoribonuclease HigB1, found in Mycobacterium tuberculosis (strain CDC 1551 / Oshkosh).